Here is a 462-residue protein sequence, read N- to C-terminus: Bifunctional protein GlmU (462 aa).

The segment at 1 to 239 (MTESVSKPVR…EASVQGVNAQ (239 aa)) is pyrophosphorylase. UDP-N-acetyl-alpha-D-glucosamine is bound by residues 17-20 (LAAG), Lys31, Gln84, and 89-90 (GT). A Mg(2+)-binding site is contributed by Asp114. 4 residues coordinate UDP-N-acetyl-alpha-D-glucosamine: Gly150, Glu165, Asn180, and Asn237. Asn237 is a Mg(2+) binding site. The interval 240 to 260 (AELAAAEAVWQQNRRKALMVD) is linker. Residues 261–462 (GVTMPAPDTV…QKDKKKDKKA (202 aa)) form an N-acetyltransferase region. UDP-N-acetyl-alpha-D-glucosamine-binding residues include Arg326 and Lys344. The Proton acceptor role is filled by His356. Positions 359 and 370 each coordinate UDP-N-acetyl-alpha-D-glucosamine. Residues Ala373, 379-380 (NY), Ser398, Ser416, and Arg433 contribute to the acetyl-CoA site.

This sequence in the N-terminal section; belongs to the N-acetylglucosamine-1-phosphate uridyltransferase family. The protein in the C-terminal section; belongs to the transferase hexapeptide repeat family. Homotrimer. Mg(2+) is required as a cofactor.

The protein localises to the cytoplasm. It carries out the reaction alpha-D-glucosamine 1-phosphate + acetyl-CoA = N-acetyl-alpha-D-glucosamine 1-phosphate + CoA + H(+). It catalyses the reaction N-acetyl-alpha-D-glucosamine 1-phosphate + UTP + H(+) = UDP-N-acetyl-alpha-D-glucosamine + diphosphate. It participates in nucleotide-sugar biosynthesis; UDP-N-acetyl-alpha-D-glucosamine biosynthesis; N-acetyl-alpha-D-glucosamine 1-phosphate from alpha-D-glucosamine 6-phosphate (route II): step 2/2. Its pathway is nucleotide-sugar biosynthesis; UDP-N-acetyl-alpha-D-glucosamine biosynthesis; UDP-N-acetyl-alpha-D-glucosamine from N-acetyl-alpha-D-glucosamine 1-phosphate: step 1/1. It functions in the pathway bacterial outer membrane biogenesis; LPS lipid A biosynthesis. Functionally, catalyzes the last two sequential reactions in the de novo biosynthetic pathway for UDP-N-acetylglucosamine (UDP-GlcNAc). The C-terminal domain catalyzes the transfer of acetyl group from acetyl coenzyme A to glucosamine-1-phosphate (GlcN-1-P) to produce N-acetylglucosamine-1-phosphate (GlcNAc-1-P), which is converted into UDP-GlcNAc by the transfer of uridine 5-monophosphate (from uridine 5-triphosphate), a reaction catalyzed by the N-terminal domain. The sequence is that of Bifunctional protein GlmU from Caulobacter vibrioides (strain ATCC 19089 / CIP 103742 / CB 15) (Caulobacter crescentus).